The primary structure comprises 754 residues: Lysyl oxidase homolog 3 (754 aa).

The signal sequence occupies residues 1–26 (MRAVSVWYCCPWGLLLLHCLCSFSVG). SRCR domains follow at residues 45-146 (FRLA…VICK), 170-283 (VRLR…VSCV), 308-408 (VRLK…VRCN), and 418-526 (IRLS…VICS). 17 disulfide bridges follow: Cys-71-Cys-135, Cys-84-Cys-145, Cys-115-Cys-125, Cys-202-Cys-272, Cys-215-Cys-282, Cys-249-Cys-259, Cys-333-Cys-397, Cys-346-Cys-407, Cys-377-Cys-387, Cys-447-Cys-512, Cys-460-Cys-525, Cys-493-Cys-503, Cys-555-Cys-561, Cys-607-Cys-655, Cys-639-Cys-645, Cys-667-Cys-677, and Cys-714-Cys-728. The N-linked (GlcNAc...) asparagine glycan is linked to Asn-112. Asn-267 carries an N-linked (GlcNAc...) asparagine glycan. Asn-391 and Asn-482 each carry an N-linked (GlcNAc...) asparagine glycan. Residues 530-733 (SDLLLHSALV…WVHNCHIGDA (204 aa)) form a lysyl-oxidase like region. Cu cation-binding residues include His-608, His-610, and His-612. The N-linked (GlcNAc...) asparagine glycan is linked to Asn-626. A cross-link (lysine tyrosylquinone (Lys-Tyr)) is located at residues 635-671 (KASFCLEDTECQEDVSKRYECANFGEQGITVGCWDLY). Tyr-671 is subject to 2',4',5'-topaquinone.

Belongs to the lysyl oxidase family. Cu cation is required as a cofactor. Lysine tyrosylquinone residue serves as cofactor. The lysine tyrosylquinone cross-link (LTQ) is generated by condensation of the epsilon-amino group of a lysine with a topaquinone produced by oxidation of tyrosine. As to expression, expressed in palate: predominantly present in the palate mesenchyme and tongue (at protein level). In spine, expressed in the original intervertebral disk, cartilage primordia, anterior and posterior longitudinal ligaments, meninges of spinal cord, lung and heart. In eyes, strongly expressed in the skin of the eyelid and weakly expressed in the cornea and sclera. In lung, predominantly expressed in the pulmonary mesenchyme. In developing muscle, expressed at myofiber ends (at protein level).

It localises to the secreted. It is found in the extracellular space. The protein resides in the cytoplasm. The protein localises to the nucleus. It catalyses the reaction L-lysyl-[protein] + O2 + H2O = (S)-2-amino-6-oxohexanoyl-[protein] + H2O2 + NH4(+). The catalysed reaction is N(6)-acetyl-L-lysyl-[protein] + O2 + H2O = acetamide + (S)-2-amino-6-oxohexanoyl-[protein] + H2O2. Functionally, protein-lysine 6-oxidase that mediates the oxidation of peptidyl lysine residues to allysine in target proteins. Catalyzes the post-translational oxidative deamination of peptidyl lysine residues in precursors of elastin and different types of collagens, a prerequisite in the formation of cross-links between collagens and elastin. Required for somite boundary formation by catalyzing oxidation of fibronectin (FN1), enhancing integrin signaling in myofibers and their adhesion to the myotendinous junction (MTJ). Acts as a regulator of inflammatory response by inhibiting differentiation of naive CD4(+) T-cells into T-helper Th17 or regulatory T-cells (Treg): acts by interacting with STAT3 in the nucleus and catalyzing both deacetylation and oxidation of lysine residues on STAT3, leading to disrupt STAT3 dimerization and inhibit STAT3 transcription activity. Oxidation of lysine residues to allysine on STAT3 preferentially takes place on lysine residues that are acetylated. Also able to catalyze deacetylation of lysine residues on STAT3. The polypeptide is Lysyl oxidase homolog 3 (Mus musculus (Mouse)).